Here is a 728-residue protein sequence, read N- to C-terminus: Catalase-peroxidase 1 (728 aa).

Residues 91-218 constitute a cross-link (tryptophyl-tyrosyl-methioninium (Trp-Tyr) (with M-244)); it reads WHSAGTYRTA…LAAVQMGLIY (128 aa). Residue H92 is the Proton acceptor of the active site. Residues 218–244 constitute a cross-link (tryptophyl-tyrosyl-methioninium (Tyr-Met) (with W-91)); the sequence is YVNPEGPDGNPDPVAAAHDIRETFARM. H259 lines the heme b pocket.

Belongs to the peroxidase family. Peroxidase/catalase subfamily. In terms of assembly, homodimer or homotetramer. Heme b is required as a cofactor. Formation of the three residue Trp-Tyr-Met cross-link is important for the catalase, but not the peroxidase activity of the enzyme.

It catalyses the reaction H2O2 + AH2 = A + 2 H2O. The catalysed reaction is 2 H2O2 = O2 + 2 H2O. Its function is as follows. Bifunctional enzyme with both catalase and broad-spectrum peroxidase activity. The sequence is that of Catalase-peroxidase 1 from Burkholderia orbicola (strain MC0-3).